A 783-amino-acid chain; its full sequence is Cyclin-dependent kinase 11A (783 aa).

Basic and acidic residues predominate over residues 18–58 (QEKKRRKEQEEKAEIKRLKNSDDRDSKRDSLEEGELRDHCM). The segment at 18-396 (QEKKRRKEQE…SALTEGDYVP (379 aa)) is disordered. S47 and S72 each carry phosphoserine. Positions 95–125 (EKVHHRKDEKRKEKWKHARVKEREHERRKRH) are enriched in basic residues. Basic and acidic residues-rich tracts occupy residues 126-215 (REEQ…DKVK), 226-241 (PPRE…KPGE), and 252-264 (QLKE…RDLL). The residue at position 271 (S271) is a Phosphoserine. The span at 279 to 290 (SAESSSAESGSG) shows a compositional bias: low complexity. 2 stretches are compositionally biased toward acidic residues: residues 291–352 (SEEE…EERE) and 371–380 (ESEEAEEEVG). The Protein kinase domain maps to 427–647 (QCLNRIEEGT…VFKELGTPSE (221 aa)). Residues 432 to 440 (IEEGTYGVV) and K455 contribute to the ATP site. S470 is modified (phosphoserine; by CDK7). T476 bears the Phosphothreonine; by CDK7 mark. The Proton acceptor role is filled by D550. Residue S577 is modified to Phosphoserine. Phosphotyrosine is present on Y582. A phosphothreonine mark is found at T583 and T739. Positions 721–783 (SMFPTWPAKS…AAGPGFSLKF (63 aa)) are disordered. Residue S740 is modified to Phosphoserine.

This sequence belongs to the protein kinase superfamily. CMGC Ser/Thr protein kinase family. CDC2/CDKX subfamily. In terms of assembly, the cleaved p110 isoform, p110C, binds to the serine/threonine kinase PAK1. The p58 isoform but not the p110 isoform or p110C interacts with CCND3. The p110 isoforms are found in large molecular weight complexes containing CCNL1 and SFRS7. Mg(2+) serves as cofactor. Post-translationally, during apoptosis, induced by Fas or tumor necrosis factor, specific CKD11 p110 isoforms are cleaved by caspases to produce a protein (p110C) that contains the C-terminal kinase domain of the CDK11 proteins. As to expression, expressed ubiquitously. Some evidence of isoform-specific tissue distribution.

Its subcellular location is the cytoplasm. It localises to the nucleus. The enzyme catalyses L-seryl-[protein] + ATP = O-phospho-L-seryl-[protein] + ADP + H(+). It carries out the reaction L-threonyl-[protein] + ATP = O-phospho-L-threonyl-[protein] + ADP + H(+). Phosphorylation at Thr-436 or Tyr-437 inactivates the enzyme, while phosphorylation at Thr-583 activates it. Appears to play multiple roles in cell cycle progression, cytokinesis and apoptosis. The p110 isoforms have been suggested to be involved in pre-mRNA splicing, potentially by phosphorylating the splicing protein SFRS7. The p58 isoform may act as a negative regulator of normal cell cycle progression. This chain is Cyclin-dependent kinase 11A (CDK11A), found in Homo sapiens (Human).